The chain runs to 607 residues: MASTHAAGSPAPSSSINSPILHPVNASVSNASLGEGSIRFSPAPPSTFSNQGDGVRSKRNKRDSRKKREAKGLDQESAPPKKKSVAVLNTAIPSSDLGILRPIAVGEPRHSDLFPPQPRQLNFAVRKMSGVIGQSWDFYEVVDKLTNKNGFRYSYAIADTDFPHIKYRQTDVPPYHARFSFEDSPAAILFSKDALAVTTNEPWHTARANVCAREGTYYYEARIISGIMSSSEATTSNGSNALPSRGHVRLGFARREADLDVNVGVDCYGYGIRDVNGEVVNRMRCEYFFPKGESIREGDVIGMLITLPPLSLHRKIVEGTYDPACDNFKPGPASATNIIRDRIPFHYKNDFCWQQSNVFPTKQLRDYAFNLKETPAFGPPSPLNAEDPSLRTLPGSSITIYKNGIKMGTPFKELYAFLPPASRLANGTNNLGLGERENADDGMIGYYPAVSCYGGGAVECRFQGPWWFSPPSATENGEPVKGIGERFDEQIVEDVLADIVDEVEAMLVWGSVDGNVVNNAEMDAPGVGAVGGTDVLKGGVGAAYDPATTLSTAPAESNGSGTASIKLADEDACHTGFEDTMSLGVANTPITDVPVPPEPEDTPMTGG.

Positions 1-19 are enriched in low complexity; sequence MASTHAAGSPAPSSSINSP. Disordered stretches follow at residues 1–22 and 34–86; these read MAST…PILH and GEGS…KSVA. Residues 57–69 are compositionally biased toward basic residues; that stretch reads SKRNKRDSRKKRE. In terms of domain architecture, B30.2/SPRY spans 157-376; sequence IADTDFPHIK…YAFNLKETPA (220 aa). Residues 587 to 607 form a disordered region; it reads NTPITDVPVPPEPEDTPMTGG.

This sequence belongs to the cclA family. As to quaternary structure, component of the COMPASS complex.

It localises to the nucleus. It is found in the chromosome. The protein localises to the telomere. Component of the COMPASS (Set1C) complex that specifically mono-, di- and trimethylates histone H3 to form H3K4me1/2/3, which subsequently plays a role in telomere length maintenance and transcription elongation regulation. Controls the production of several secondary metabolites, including monodictyphenone, emodin and emodin derivatives, as well as two anti-osteoporosis polyketides, F9775A and F9775B. In Emericella nidulans (strain FGSC A4 / ATCC 38163 / CBS 112.46 / NRRL 194 / M139) (Aspergillus nidulans), this protein is COMPASS component cclA.